We begin with the raw amino-acid sequence, 342 residues long: Trans-3-hydroxy-L-proline dehydratase (342 aa).

The active-site Proton acceptor is Ser90. Substrate is bound by residues Gly91–Ser92, Asp252, and Gly257–Thr258.

The protein belongs to the proline racemase family.

It carries out the reaction trans-3-hydroxy-L-proline = 1-pyrroline-2-carboxylate + H2O. Catalyzes the dehydration of trans-3-hydroxy-L-proline (t3LHyp) to Delta(1)-pyrroline-2-carboxylate (Pyr2C). Is likely involved in a degradation pathway that converts t3LHyp to L-proline. Displays neither proline racemase activity nor 4-hydroxyproline 2-epimerase activity. This Allorhizobium ampelinum (strain ATCC BAA-846 / DSM 112012 / S4) (Agrobacterium vitis (strain S4)) protein is Trans-3-hydroxy-L-proline dehydratase.